Reading from the N-terminus, the 804-residue chain is Endoplasmin (804 aa).

The signal sequence occupies residues 1-21 (MRALWVLGLCCVLLTFGSVRA). The SRT pseudosubstrate motif signature appears at 42–44 (SRT). Asn62 is a glycosylation site (N-linked (GlcNAc...) asparagine). Ser64 bears the Phosphoserine mark. N-linked (GlcNAc...) asparagine glycosylation is present at Asn107. The ATP site is built by Asn107, Asp149, and Asn162. Lys168 is subject to N6-(2-hydroxyisobutyryl)lysine. Ser172 bears the Phosphoserine mark. Phe199 provides a ligand contact to ATP. The N-linked (GlcNAc...) asparagine glycan is linked to Asn217. Thr288 is modified (phosphothreonine; by CK2). The interval 288–323 (TVEEPMEEEEAAKEEKEDSDDEAAVEEEEEEKKPKT) is disordered. Residues 289-317 (VEEPMEEEEAAKEEKEDSDDEAAVEEEEE) show a composition bias toward acidic residues. Ser306 bears the Phosphoserine; by CK2 mark. The residue at position 403 (Ser403) is a Phosphoserine. The residue at position 404 (Lys404) is an N6-succinyllysine. N-linked (GlcNAc...) asparagine glycosylation occurs at Asn445. Ser447 carries the phosphoserine modification. Residue Lys479 is modified to N6-acetyllysine. N-linked (GlcNAc...) asparagine glycans are attached at residues Asn481 and Asn502. Position 633 is an N6-succinyllysine (Lys633). Positions 750–804 (DPDAKVEEEPEEEPEETTEDTTEDTEQDDEEEMDAGTDDEEQETVKKSTAEKDEL) are disordered. Residues 757–791 (EEPEEEPEETTEDTTEDTEQDDEEEMDAGTDDEEQ) are compositionally biased toward acidic residues. Residues Thr766, Thr770, Thr774, and Thr786 each carry the phosphothreonine; by CK2 modification. The segment covering 792-804 (ETVKKSTAEKDEL) has biased composition (basic and acidic residues). A Prevents secretion from ER motif is present at residues 801–804 (KDEL).

The protein belongs to the heat shock protein 90 family. As to quaternary structure, homodimer; disulfide-linked. Component of an EIF2 complex at least composed of CELF1/CUGBP1, CALR, CALR3, EIF2S1, EIF2S2, HSP90B1 and HSPA5. Part of a large chaperone multiprotein complex comprising DNAJB11, HSP90B1, HSPA5, HYOU, PDIA2, PDIA4, PDIA6, PPIB, SDF2L1, UGGT1 and very small amounts of ERP29, but not, or at very low levels, CALR nor CANX. Interacts with AIMP1; regulates its retention in the endoplasmic reticulum. Hyperglycosylated form interacts with OS9; promoting its degradation by the endoplasmic reticulum associated degradation (ERAD). Interacts with CNPY3. This interaction is disrupted in the presence of ATP. Interacts with TLR4 and TLR9, but not with TLR3. Interacts with MZB1 in a calcium-dependent manner. Interacts with METTL23. Interacts with IL1B; the interaction facilitates cargo translocation into the ERGIC. Interacts with EIF2AK3. Phosphorylated by CK2. Post-translationally, N-glycosylated cotranslationally at Asn-217 by STT3A-containing OST-A complex: this glycosylation is constitutive. In response to various stress, 5 additional facultative sites (Asn-62, Asn-107, Asn-445, Asn-481 and Asn-502) can be glycosylated post-translationally by STT3B-containing OST-B complex, leading to a hyperglycosylated form that is degraded by the ER-associated degradation (ERAD) pathway. In normal conditions, the OST-A complex together with CCDC134 prevent glycosylation at facultative sites during protein folding, thereby preventing hyperglycosylation. Mechanistically, nascent HSP90B1 is tethered during translation to a specialized CCDC134-containing translocon that forms a microenvironment for its folding, in which STT3A associates with the SRT pseudosubstrate motif, and prevents access to facultative glycosylation sites until folding is completed, rendering its facultative sites inaccessible to the OST-B complex. As to expression, detected in heart muscle (at protein level).

The protein resides in the endoplasmic reticulum lumen. It localises to the sarcoplasmic reticulum lumen. It is found in the melanosome. The catalysed reaction is ATP + H2O = ADP + phosphate + H(+). Functionally, ATP-dependent chaperone involved in the processing of proteins in the endoplasmic reticulum, regulating their transport. Together with MESD, acts as a modulator of the Wnt pathway by promoting the folding of LRP6, a coreceptor of the canonical Wnt pathway. When associated with CNPY3, required for proper folding of Toll-like receptors. Promotes folding and trafficking of TLR4 to the cell surface. May participate in the unfolding of cytosolic leaderless cargos (lacking the secretion signal sequence) such as the interleukin 1/IL-1 to facilitate their translocation into the ERGIC (endoplasmic reticulum-Golgi intermediate compartment) and secretion; the translocation process is mediated by the cargo receptor TMED10. May also function in endoplasmic reticulum associated degradation (ERAD); it is however unclear whether it participates to ERAD or is a target of ERAD. The protein is Endoplasmin (HSP90B1) of Canis lupus familiaris (Dog).